We begin with the raw amino-acid sequence, 357 residues long: BLOC-1-related complex subunit 6 (357 aa).

The disordered stretch occupies residues His20–Thr196. Residues Gly90 to Gly99 are compositionally biased toward low complexity. A compositionally biased stretch (acidic residues) spans Glu138–Ala149. The segment covering Ala150 to Arg162 has biased composition (low complexity). Ser168 is subject to Phosphoserine. Phosphothreonine is present on Thr196. Ser199 carries the post-translational modification Phosphoserine. Residues Leu227–Ile256 are disordered. Residues Ala230–Ile256 are compositionally biased toward pro residues.

It belongs to the BORCS6 family. Component of the BLOC-one-related complex (BORC) which is composed of BLOC1S1, BLOC1S2, BORCS5, BORCS6, BORCS7, BORCS8, KXD1 and SNAPIN.

It localises to the lysosome membrane. Its function is as follows. As part of the BORC complex may play a role in lysosomes movement and localization at the cell periphery. Associated with the cytosolic face of lysosomes, the BORC complex may recruit ARL8B and couple lysosomes to microtubule plus-end-directed kinesin motor. This chain is BLOC-1-related complex subunit 6, found in Homo sapiens (Human).